Consider the following 200-residue polypeptide: Recombination protein RecR (200 aa).

The segment at 58-75 adopts a C4-type zinc-finger fold; that stretch reads CSTCFCLKNLPESNCEFC. The Toprim domain occupies 82–177; that stretch reads STLCIVATPK…SISRLALGLP (96 aa).

It belongs to the RecR family.

Its function is as follows. May play a role in DNA repair. It seems to be involved in an RecBC-independent recombinational process of DNA repair. It may act with RecF and RecO. This chain is Recombination protein RecR, found in Chlamydia caviae (strain ATCC VR-813 / DSM 19441 / 03DC25 / GPIC) (Chlamydophila caviae).